The sequence spans 626 residues: UvrABC system protein C (626 aa).

The 78-residue stretch at 20-97 (ECSGVYKMLD…IKKFQPKFNI (78 aa)) folds into the GIY-YIG domain. The 36-residue stretch at 207–242 (RELQENLSKKMQELSSQMRFEEAAEIRDRIKALSYV) folds into the UVR domain.

It belongs to the UvrC family. In terms of assembly, interacts with UvrB in an incision complex.

The protein localises to the cytoplasm. In terms of biological role, the UvrABC repair system catalyzes the recognition and processing of DNA lesions. UvrC both incises the 5' and 3' sides of the lesion. The N-terminal half is responsible for the 3' incision and the C-terminal half is responsible for the 5' incision. This is UvrABC system protein C from Rickettsia typhi (strain ATCC VR-144 / Wilmington).